Reading from the N-terminus, the 499-residue chain is Endosomal/lysosomal proton channel TMEM175 (499 aa).

Residues methionine 1–serine 30 lie on the Cytoplasmic side of the membrane. The segment at methionine 1–serine 30 is disordered. At threonine 6 the chain carries Phosphothreonine. A helical membrane pass occupies residues histidine 31–threonine 53. The short motif at arginine 32 to aspartate 38 is the RxxxFSD motif 1 element. The Lumenal portion of the chain corresponds to histidine 54–arginine 74. Residues threonine 55–glutamate 60 form a short helix H1-1 region. Positions glutamine 62–glutamine 68 are short helix H2-1. A helical transmembrane segment spans residues isoleucine 75 to glutamine 97. Over valine 98–aspartate 103 the chain is Cytoplasmic. The helical transmembrane segment at aspartate 104–serine 125 threads the bilayer. Residues leucine 126–leucine 135 lie on the Lumenal side of the membrane. Residues glycine 136–tyrosine 157 form a helical membrane-spanning segment. Over alanine 158–histidine 181 the chain is Cytoplasmic. A helical membrane pass occupies residues isoleucine 182–phenylalanine 202. Topologically, residues phenylalanine 203–serine 207 are lumenal. The chain crosses the membrane as a helical span at residues tyrosine 208–cysteine 227. Over lysine 228–serine 254 the chain is Cytoplasmic. Residues lysine 255–glutamate 279 traverse the membrane as a helical segment. Residues arginine 257–aspartate 263 carry the RxxxFSD motif 2 motif. At aspartate 280 to glutamine 306 the chain is on the lumenal side. The short helix H1-2 stretch occupies residues proline 285–serine 293. The segment at serine 295–glycine 301 is short helix H2-2. The chain crosses the membrane as a helical span at residues phenylalanine 307 to leucine 329. Topologically, residues histidine 330–threonine 335 are cytoplasmic. The helical transmembrane segment at glutamine 336–glutamine 357 threads the bilayer. Over glutamine 358–arginine 372 the chain is Lumenal. A helical membrane pass occupies residues valine 373–threonine 393. At alanine 394 to histidine 413 the chain is on the cytoplasmic side. The helical transmembrane segment at alanine 414 to leucine 437 threads the bilayer. The Lumenal portion of the chain corresponds to serine 438–arginine 439. A helical membrane pass occupies residues phenylalanine 440–alanine 466. The Cytoplasmic portion of the chain corresponds to leucine 467–cysteine 499.

It belongs to the TMEM175 family. In terms of assembly, homodimer. Interacts with AKT (AKT1, AKT2 or AKT3); leading to formation of the lysoK(GF) complex, which activates the channel. Interacts with LAMP1; inhibiting the proton channel activity of TMEM175. Interacts with LAMP2; inhibiting the proton channel activity of TMEM175.

Its subcellular location is the endosome membrane. It localises to the lysosome membrane. The enzyme catalyses H(+)(in) = H(+)(out). It carries out the reaction K(+)(in) = K(+)(out). Its activity is regulated as follows. Active at low pH (under pH 4.6): proton channel activity is activated by luminal side protons. Polyunsaturated fatty acids, such as arachidonic acid, also activate the channel activity. Proton channel activity is directly inhibited by LAMP1 or LAMP2, facilitating lysosomal acidification. Channel activity is activated following interaction with AKT (AKT1, AKT2 or AKT3): interaction promotes activation from closed to an open state. Activation by AKT is independent of AKT serine/threonine-protein kinase activity. Proton-activated proton channel that catalyzes proton efflux from endosomes and lysosomes to maintain a steady-state pH. Activated at low pH (under pH 4.6) by luminal side protons: selectively mediates lysosomal proton release from lysosomes, eliciting a proton leak that balances V-ATPase activity to maintain pH homeostasis. Regulation of lumenal pH stability is required for autophagosome-lysosome fusion. Also acts as a potassium channel at higher pH, regulating potassium conductance in endosomes and lysosomes. Constitutes the pore-forming subunit of the lysoK(GF) complex, a complex activated by extracellular growth factors. The lysoK(GF) complex is composed of TMEM175 and AKT (AKT1, AKT2 or AKT3), a major target of growth factor receptors: in the complex, TMEM175 channel is opened by conformational changes by AKT, leading to its activation. The lysoK(GF) complex is required to protect neurons against stress-induced damage. This chain is Endosomal/lysosomal proton channel TMEM175, found in Mus musculus (Mouse).